Consider the following 25-residue polypeptide: Kunitz-type serine protease inhibitor 4 (25 aa).

Residues 7-25 (TCYLPKETGPCVGYFFRYY) enclose the BPTI/Kunitz inhibitor domain.

It localises to the secreted. Functionally, inhibits trypsin, human plasma kallikrein and human neutrophil elastase. The polypeptide is Kunitz-type serine protease inhibitor 4 (Rhipicephalus microplus (Cattle tick)).